Consider the following 141-residue polypeptide: Sperm protein associated with the nucleus on the X chromosome N3 (141 aa).

Residues 1–10 (MEQPTSSTNG) show a composition bias toward polar residues. Disordered stretches follow at residues 1-47 (MEQP…TKTS) and 66-141 (NQLE…SGED). Over residues 11–26 (EKTKSPCESNNKKNDE) the composition is skewed to basic and acidic residues. The span at 66–80 (NQLENEQSQENSINP) shows a compositional bias: polar residues. The span at 84–103 (EEDEGVDLSEGSSNEDEDLG) shows a compositional bias: acidic residues. Residues 132–141 (EGSSQDSGED) show a composition bias toward polar residues.

Belongs to the SPAN-X family.

The sequence is that of Sperm protein associated with the nucleus on the X chromosome N3 (SPANXN3) from Homo sapiens (Human).